The chain runs to 539 residues: UDP-N-acetylmuramate--L-alanine ligase (539 aa).

165-171 (GTHGKTT) is an ATP binding site.

This sequence belongs to the MurCDEF family.

Its subcellular location is the cytoplasm. The catalysed reaction is UDP-N-acetyl-alpha-D-muramate + L-alanine + ATP = UDP-N-acetyl-alpha-D-muramoyl-L-alanine + ADP + phosphate + H(+). It participates in cell wall biogenesis; peptidoglycan biosynthesis. Its function is as follows. Cell wall formation. The chain is UDP-N-acetylmuramate--L-alanine ligase from Trichodesmium erythraeum (strain IMS101).